Consider the following 239-residue polypeptide: 2-C-methyl-D-erythritol 4-phosphate cytidylyltransferase (239 aa).

Belongs to the IspD/TarI cytidylyltransferase family. IspD subfamily. As to quaternary structure, homodimer.

It carries out the reaction 2-C-methyl-D-erythritol 4-phosphate + CTP + H(+) = 4-CDP-2-C-methyl-D-erythritol + diphosphate. Its pathway is isoprenoid biosynthesis; isopentenyl diphosphate biosynthesis via DXP pathway; isopentenyl diphosphate from 1-deoxy-D-xylulose 5-phosphate: step 2/6. Functionally, catalyzes the formation of 4-diphosphocytidyl-2-C-methyl-D-erythritol from CTP and 2-C-methyl-D-erythritol 4-phosphate (MEP). The protein is 2-C-methyl-D-erythritol 4-phosphate cytidylyltransferase of Sodalis glossinidius (strain morsitans).